Consider the following 596-residue polypeptide: Cis-3-hydroxy-L-proline dehydratase (596 aa).

The active-site Proton acceptor is Ser-67.

The protein belongs to the AcnX family. As to quaternary structure, monomer. The cofactor is Fe(3+).

It carries out the reaction cis-3-hydroxy-L-proline = 1-pyrroline-2-carboxylate + H2O. With respect to regulation, inhibited by Zn(2+). Not inhibited by pyrrole-2-carboxylate nor its derivative 2-thiophenecarboxylate. In terms of biological role, catalyzes the dehydration of cis-3-hydroxy-L-proline (c3LHyp) to Delta(1)-pyrroline-2-carboxylate (Pyr2C). No activity with L-proline, trans-4-hydroxy-L-proline (t4LHyp), cis-4-hydroxy-L-proline (c4LHyp), trans-3-hydroxy-L-proline (t3LHyp), D-proline, cis-4-hydroxy-D-proline (c4DHyp), trans-4-hydroxy-D-proline (t4DHyp) or L-serine as substrates. Because of the low catalytic efficiency, C3LHyp is likely not a main physiological substrate of this enzyme in H.jecorina. This Hypocrea jecorina (strain QM6a) (Trichoderma reesei) protein is Cis-3-hydroxy-L-proline dehydratase.